We begin with the raw amino-acid sequence, 283 residues long: Bifunctional protein FolD 2 (283 aa).

NADP(+)-binding positions include 165–167 (GRG), Thr-192, and Val-233.

The protein belongs to the tetrahydrofolate dehydrogenase/cyclohydrolase family. In terms of assembly, homodimer.

The catalysed reaction is (6R)-5,10-methylene-5,6,7,8-tetrahydrofolate + NADP(+) = (6R)-5,10-methenyltetrahydrofolate + NADPH. It catalyses the reaction (6R)-5,10-methenyltetrahydrofolate + H2O = (6R)-10-formyltetrahydrofolate + H(+). It participates in one-carbon metabolism; tetrahydrofolate interconversion. Its function is as follows. Catalyzes the oxidation of 5,10-methylenetetrahydrofolate to 5,10-methenyltetrahydrofolate and then the hydrolysis of 5,10-methenyltetrahydrofolate to 10-formyltetrahydrofolate. This is Bifunctional protein FolD 2 from Nocardioides sp. (strain ATCC BAA-499 / JS614).